Here is a 159-residue protein sequence, read N- to C-terminus: 2-C-methyl-D-erythritol 2,4-cyclodiphosphate synthase (159 aa).

Residues D10 and H12 each contribute to the a divalent metal cation site. 4-CDP-2-C-methyl-D-erythritol 2-phosphate is bound by residues 10–12 (DVH) and 36–37 (HS). H44 contacts a divalent metal cation. 4-CDP-2-C-methyl-D-erythritol 2-phosphate-binding positions include 58 to 60 (DIG), 63 to 67 (FPDTD), 102 to 108 (AQAPKMA), 134 to 137 (TTTE), F141, 141 to 144 (FTGR), and R144.

The protein belongs to the IspF family. As to quaternary structure, homotrimer. Requires a divalent metal cation as cofactor.

It catalyses the reaction 4-CDP-2-C-methyl-D-erythritol 2-phosphate = 2-C-methyl-D-erythritol 2,4-cyclic diphosphate + CMP. It functions in the pathway isoprenoid biosynthesis; isopentenyl diphosphate biosynthesis via DXP pathway; isopentenyl diphosphate from 1-deoxy-D-xylulose 5-phosphate: step 4/6. Its function is as follows. Involved in the biosynthesis of isopentenyl diphosphate (IPP) and dimethylallyl diphosphate (DMAPP), two major building blocks of isoprenoid compounds. Catalyzes the conversion of 4-diphosphocytidyl-2-C-methyl-D-erythritol 2-phosphate (CDP-ME2P) to 2-C-methyl-D-erythritol 2,4-cyclodiphosphate (ME-CPP) with a corresponding release of cytidine 5-monophosphate (CMP). The protein is 2-C-methyl-D-erythritol 2,4-cyclodiphosphate synthase of Shewanella oneidensis (strain ATCC 700550 / JCM 31522 / CIP 106686 / LMG 19005 / NCIMB 14063 / MR-1).